The following is a 266-amino-acid chain: Undecaprenyl-diphosphatase (266 aa).

Helical transmembrane passes span 41–61 (NLAFTIVVHVATVFSTLVILW), 82–102 (YVINILISMIPIGIVGVFFKD), 106–126 (AIFGSGLLIVGCMLLLTAALL), 140–160 (ISMKDAFIIGLAQACAVLPGL), 180–200 (LAQFSFLMVIPPILGEALLDG), 213–233 (IPTLSLIVGFIAAFVSGCLAC), and 245–265 (LIYFAIYCAIVGVVTIVVSQL).

The protein belongs to the UppP family.

It is found in the cell inner membrane. The enzyme catalyses di-trans,octa-cis-undecaprenyl diphosphate + H2O = di-trans,octa-cis-undecaprenyl phosphate + phosphate + H(+). Its function is as follows. Catalyzes the dephosphorylation of undecaprenyl diphosphate (UPP). Confers resistance to bacitracin. In Bacteroides fragilis (strain ATCC 25285 / DSM 2151 / CCUG 4856 / JCM 11019 / LMG 10263 / NCTC 9343 / Onslow / VPI 2553 / EN-2), this protein is Undecaprenyl-diphosphatase.